The sequence spans 141 residues: Universal stress protein A homolog (141 aa).

It belongs to the universal stress protein A family. Homodimer.

It localises to the cytoplasm. Functionally, required for resistance to DNA-damaging agents. This is Universal stress protein A homolog (uspA) from Haemophilus ducreyi (strain 35000HP / ATCC 700724).